The sequence spans 233 residues: 2,3,4,5-tetrahydropyridine-2,6-dicarboxylate N-acetyltransferase (233 aa).

The protein belongs to the transferase hexapeptide repeat family. DapH subfamily.

The enzyme catalyses (S)-2,3,4,5-tetrahydrodipicolinate + acetyl-CoA + H2O = L-2-acetamido-6-oxoheptanedioate + CoA. It participates in amino-acid biosynthesis; L-lysine biosynthesis via DAP pathway; LL-2,6-diaminopimelate from (S)-tetrahydrodipicolinate (acetylase route): step 1/3. Functionally, catalyzes the transfer of an acetyl group from acetyl-CoA to tetrahydrodipicolinate. This is 2,3,4,5-tetrahydropyridine-2,6-dicarboxylate N-acetyltransferase from Petrotoga mobilis (strain DSM 10674 / SJ95).